Consider the following 357-residue polypeptide: F-box only protein 25 (357 aa).

Positions 1-83 (MPFLGQDWRS…NDTNTQCFYR (83 aa)) are interaction with beta-actin. The region spanning 225–273 (LTLSDLPVHMLSNILYRFSDGWDIVTLGQVTPTLSALSEDRQLWKKLCQ) is the F-box domain.

In terms of assembly, part of a SCF (SKP1-cullin-F-box) protein ligase complex consisting of FBXO25, SKP1, CUL1 and RBX1. Interacts directly with SKP1 and CUL1. Interacts (via C-terminus) with beta-actin (via N-terminus).

It localises to the nucleus. It functions in the pathway protein modification; protein ubiquitination. In terms of biological role, substrate-recognition component of the SCF (SKP1-CUL1-F-box protein)-type E3 ubiquitin ligase complex. May play a role in accumulation of expanded polyglutamine (polyQ) protein huntingtin (HTT). The sequence is that of F-box only protein 25 (FBXO25) from Bos taurus (Bovine).